The chain runs to 125 residues: Large ribosomal subunit protein bL12 (125 aa).

Belongs to the bacterial ribosomal protein bL12 family. Homodimer. Part of the ribosomal stalk of the 50S ribosomal subunit. Forms a multimeric L10(L12)X complex, where L10 forms an elongated spine to which 2 to 4 L12 dimers bind in a sequential fashion. Binds GTP-bound translation factors.

In terms of biological role, forms part of the ribosomal stalk which helps the ribosome interact with GTP-bound translation factors. Is thus essential for accurate translation. This is Large ribosomal subunit protein bL12 from Dictyoglomus thermophilum (strain ATCC 35947 / DSM 3960 / H-6-12).